We begin with the raw amino-acid sequence, 1370 residues long: DNA-directed RNA polymerase subunit beta (1370 aa).

Belongs to the RNA polymerase beta chain family. In terms of assembly, the RNAP catalytic core consists of 2 alpha, 1 beta, 1 beta' and 1 omega subunit. When a sigma factor is associated with the core the holoenzyme is formed, which can initiate transcription.

The enzyme catalyses RNA(n) + a ribonucleoside 5'-triphosphate = RNA(n+1) + diphosphate. Its function is as follows. DNA-dependent RNA polymerase catalyzes the transcription of DNA into RNA using the four ribonucleoside triphosphates as substrates. The chain is DNA-directed RNA polymerase subunit beta from Delftia acidovorans (strain DSM 14801 / SPH-1).